The following is a 623-amino-acid chain: ATPase expression protein 3 (623 aa).

5 PPR repeats span residues 217-251 (SVQC…GCKP), 252-292 (NTTT…NGIF), 362-396 (NLKF…QLKF), 405-439 (NSET…LVGP), and 445-479 (NVNT…SERY).

It localises to the mitochondrion inner membrane. Required for respiration. The protein is ATPase expression protein 3 (AEP3) of Candida glabrata (strain ATCC 2001 / BCRC 20586 / JCM 3761 / NBRC 0622 / NRRL Y-65 / CBS 138) (Yeast).